Here is a 721-residue protein sequence, read N- to C-terminus: MKIYAVREPVFSGPTPSFQNVSNDIPLVIDNGSWQLRAGWGGEKDPKLVFDNLVSRYRDRKLSRTSTLVGNDTLIEVGSRSIARSPFERNVISNWDLMEQVLDYTFLKLGIDRMEHPICMTEPLANPTYVRSTMTELLFELYNAPSVAYGIDGLFSFYHNTKPSSSGIVLNLGNAASHVIPVLNGERILSEAKRISWGGSQSSSYLLKLFQIKYPSFPIKMLPSQAELLMHDHCHVSSDYTHDIAHALDRDILERDEIVLQFPYTEAAAQEKSQEELELIAERKRESGRRLQAQAAIKRKEKAAERDRELATLTELQQQSLVLSRRAFQRALEEAGFEDESQLNAQVKNVQAKIRRAQRDQQRQEESEGSLDVTEIDVEQAFPLLNVPDAELDEAGLRQKRHQRLMKANYDARVRAKAEKAIEEAAEAERAEADERLRLENFSTWVNEKRETHKILLEKISKNKRLKFELNDRKSHASQMRMKSLATLASEQPIQKRKRKDQSEDNFGARDEDWKVYHDVLTAEQLEEERKKLLDQIYSLEKQLLEYDSQFTQANTYDTLNDPRATLLYAFTRGVSDFDVNDVAQAFQLHLNVEQIRVPEVIFSPSIVGIDQAGILEIMRSILQRHSLEEQQKLVSNVLITGGLGSLPGMETRIKRELTSIMPVGSSINVFRASNPLLDAWKGASEWSVTEKFKAAKVTREEYLEKGPEYIKEHSLGNINS.

The stretch at Glu-266 to Glu-368 forms a coiled coil. Residues Ala-486–Phe-507 are disordered.

It belongs to the actin family. Component of the INO80 chromatin remodeling complex.

Its subcellular location is the nucleus. Functionally, component of the INO80 complex which remodels chromatin by shifting nucleosomes and is involved in DNA repair. This is Actin-like protein arp5 (arp5) from Schizosaccharomyces pombe (strain 972 / ATCC 24843) (Fission yeast).